Consider the following 303-residue polypeptide: N-acetyl-D-glucosamine kinase (303 aa).

ATP is bound by residues 4–11 and 133–140; these read GFDIGGTK and GVGGGLIF. The Zn(2+) site is built by H157, C177, C179, and C184.

The protein belongs to the ROK (NagC/XylR) family. NagK subfamily.

It carries out the reaction N-acetyl-D-glucosamine + ATP = N-acetyl-D-glucosamine 6-phosphate + ADP + H(+). It functions in the pathway cell wall biogenesis; peptidoglycan recycling. Functionally, catalyzes the phosphorylation of N-acetyl-D-glucosamine (GlcNAc) derived from cell-wall degradation, yielding GlcNAc-6-P. This Shigella sonnei (strain Ss046) protein is N-acetyl-D-glucosamine kinase.